A 316-amino-acid chain; its full sequence is 4-hydroxy-3-methylbut-2-enyl diphosphate reductase (316 aa).

Cys12 lines the [4Fe-4S] cluster pocket. (2E)-4-hydroxy-3-methylbut-2-enyl diphosphate-binding residues include His41 and His74. Dimethylallyl diphosphate is bound by residues His41 and His74. Isopentenyl diphosphate contacts are provided by His41 and His74. Cys96 contributes to the [4Fe-4S] cluster binding site. His124 is a binding site for (2E)-4-hydroxy-3-methylbut-2-enyl diphosphate. A dimethylallyl diphosphate-binding site is contributed by His124. His124 is a binding site for isopentenyl diphosphate. The Proton donor role is filled by Glu126. Thr168 contributes to the (2E)-4-hydroxy-3-methylbut-2-enyl diphosphate binding site. Cys198 is a [4Fe-4S] cluster binding site. The (2E)-4-hydroxy-3-methylbut-2-enyl diphosphate site is built by Ser226, Ser227, Asn228, and Ser270. Residues Ser226, Ser227, Asn228, and Ser270 each contribute to the dimethylallyl diphosphate site. Ser226, Ser227, Asn228, and Ser270 together coordinate isopentenyl diphosphate.

It belongs to the IspH family. It depends on [4Fe-4S] cluster as a cofactor.

It carries out the reaction isopentenyl diphosphate + 2 oxidized [2Fe-2S]-[ferredoxin] + H2O = (2E)-4-hydroxy-3-methylbut-2-enyl diphosphate + 2 reduced [2Fe-2S]-[ferredoxin] + 2 H(+). It catalyses the reaction dimethylallyl diphosphate + 2 oxidized [2Fe-2S]-[ferredoxin] + H2O = (2E)-4-hydroxy-3-methylbut-2-enyl diphosphate + 2 reduced [2Fe-2S]-[ferredoxin] + 2 H(+). Its pathway is isoprenoid biosynthesis; dimethylallyl diphosphate biosynthesis; dimethylallyl diphosphate from (2E)-4-hydroxy-3-methylbutenyl diphosphate: step 1/1. It participates in isoprenoid biosynthesis; isopentenyl diphosphate biosynthesis via DXP pathway; isopentenyl diphosphate from 1-deoxy-D-xylulose 5-phosphate: step 6/6. Catalyzes the conversion of 1-hydroxy-2-methyl-2-(E)-butenyl 4-diphosphate (HMBPP) into a mixture of isopentenyl diphosphate (IPP) and dimethylallyl diphosphate (DMAPP). Acts in the terminal step of the DOXP/MEP pathway for isoprenoid precursor biosynthesis. The chain is 4-hydroxy-3-methylbut-2-enyl diphosphate reductase from Acinetobacter baumannii (strain AB307-0294).